We begin with the raw amino-acid sequence, 104 residues long: Large ribosomal subunit protein uL23 (104 aa).

The protein belongs to the universal ribosomal protein uL23 family. As to quaternary structure, part of the 50S ribosomal subunit. Contacts protein L29, and trigger factor when it is bound to the ribosome.

Functionally, one of the early assembly proteins it binds 23S rRNA. One of the proteins that surrounds the polypeptide exit tunnel on the outside of the ribosome. Forms the main docking site for trigger factor binding to the ribosome. The chain is Large ribosomal subunit protein uL23 from Nostoc punctiforme (strain ATCC 29133 / PCC 73102).